Consider the following 194-residue polypeptide: dTTP/UTP pyrophosphatase (194 aa).

Asp73 (proton acceptor) is an active-site residue.

The protein belongs to the Maf family. YhdE subfamily. Requires a divalent metal cation as cofactor.

The protein localises to the cytoplasm. The catalysed reaction is dTTP + H2O = dTMP + diphosphate + H(+). The enzyme catalyses UTP + H2O = UMP + diphosphate + H(+). In terms of biological role, nucleoside triphosphate pyrophosphatase that hydrolyzes dTTP and UTP. May have a dual role in cell division arrest and in preventing the incorporation of modified nucleotides into cellular nucleic acids. The chain is dTTP/UTP pyrophosphatase from Clostridium botulinum (strain ATCC 19397 / Type A).